We begin with the raw amino-acid sequence, 296 residues long: Zinc finger protein 75A (296 aa).

The KRAB domain maps to 1 to 66 (MYFSQEEWEL…VSPEFKDSAG (66 aa)). 5 C2H2-type zinc fingers span residues 161 to 183 (FKCQECGKTFRVSSDLIKHQRIH), 189 to 211 (YKCQQCDKRFRWSSDLNKHLTTH), 217 to 239 (YKCSWCGKSFSQNTNLHTHQRTH), 245 to 267 (FTCHECGKKFSQNSHLIKHRRTH), and 273 to 295 (YTCSICRRNFSRRSSLLRHQKLH).

Belongs to the krueppel C2H2-type zinc-finger protein family.

The protein localises to the nucleus. In terms of biological role, may be involved in transcriptional regulation. The sequence is that of Zinc finger protein 75A (ZNF75A) from Homo sapiens (Human).